The following is a 353-amino-acid chain: Carbamoyl phosphate synthase arginine-specific small chain (353 aa).

A CPSase region spans residues 1-162; it reads MEGYLVLEDG…EISTFGDGNK (162 aa). L-glutamine contacts are provided by Ser-44, Gly-210, and Gly-212. Residues 163-349 form the Glutamine amidotransferase type-1 domain; it reads HIALIDFGYK…LKNVIPARRE (187 aa). Cys-237 (nucleophile) is an active-site residue. L-glutamine-binding residues include Leu-238, Gln-241, Asn-279, and Tyr-282. Residues His-322 and Glu-324 contribute to the active site.

Belongs to the CarA family. As to quaternary structure, composed of two chains; the small (or glutamine) chain promotes the hydrolysis of glutamine to ammonia, which is used by the large (or ammonia) chain to synthesize carbamoyl phosphate. Tetramer of heterodimers (alpha,beta)4.

The catalysed reaction is hydrogencarbonate + L-glutamine + 2 ATP + H2O = carbamoyl phosphate + L-glutamate + 2 ADP + phosphate + 2 H(+). It catalyses the reaction L-glutamine + H2O = L-glutamate + NH4(+). The protein operates within amino-acid biosynthesis; L-arginine biosynthesis; carbamoyl phosphate from bicarbonate: step 1/1. Functionally, small subunit of the glutamine-dependent carbamoyl phosphate synthetase (CPSase). CPSase catalyzes the formation of carbamoyl phosphate from the ammonia moiety of glutamine, carbonate, and phosphate donated by ATP, constituting the first step of the biosynthetic pathway leading to arginine and/or urea. The small subunit (glutamine amidotransferase) binds and cleaves glutamine to supply the large subunit with the substrate ammonia. The protein is Carbamoyl phosphate synthase arginine-specific small chain of Bacillus subtilis (strain 168).